Reading from the N-terminus, the 241-residue chain is Pyridoxal phosphate phosphatase PHOSPHO2 (241 aa).

Catalysis depends on D8, which acts as the Nucleophile. Positions 8 and 10 each coordinate Mg(2+). Catalysis depends on D10, which acts as the Proton donor. Substrate-binding residues include D19 and D99. D179 contributes to the Mg(2+) binding site.

This sequence belongs to the HAD-like hydrolase superfamily. PHOSPHO family. Mg(2+) is required as a cofactor.

The enzyme catalyses pyridoxal 5'-phosphate + H2O = pyridoxal + phosphate. Functionally, phosphatase that has high activity toward pyridoxal 5'-phosphate (PLP). Also active at much lower level toward pyrophosphate, phosphoethanolamine (PEA), phosphocholine (PCho), phospho-l-tyrosine, fructose-6-phosphate, p-nitrophenyl phosphate, and h-glycerophosphate. This is Pyridoxal phosphate phosphatase PHOSPHO2 (Phospho2) from Rattus norvegicus (Rat).